A 237-amino-acid polypeptide reads, in one-letter code: Mitochondrial inner membrane protease atp23 (237 aa).

Residues 1-18 are compositionally biased toward polar residues; the sequence is MSTSESSNNGSQPGNQDT. A disordered region spans residues 1–24; it reads MSTSESSNNGSQPGNQDTGYIPGD. Histidine 136 is an a divalent metal cation binding site. Glutamate 137 is a catalytic residue. Residue histidine 140 coordinates a divalent metal cation.

It belongs to the peptidase M76 family.

It localises to the mitochondrion inner membrane. Has a dual role in the assembly of mitochondrial ATPase. Acts as a protease that removes N-terminal residues of mitochondrial ATPase CF(0) subunit 6 at the intermembrane space side. Also involved in the correct assembly of the membrane-embedded ATPase CF(0) particle, probably mediating association of subunit 6 with the subunit 9 ring. In Aspergillus niger (strain ATCC MYA-4892 / CBS 513.88 / FGSC A1513), this protein is Mitochondrial inner membrane protease atp23 (atp23).